A 151-amino-acid polypeptide reads, in one-letter code: Small ribosomal subunit protein uS19 (151 aa).

N-acetylalanine is present on Ala-2.

The protein belongs to the universal ribosomal protein uS19 family.

In terms of biological role, negatively regulates lifespan. The protein is Small ribosomal subunit protein uS19 of Caenorhabditis elegans.